A 341-amino-acid chain; its full sequence is Methionine import ATP-binding protein MetN (341 aa).

The ABC transporter domain occupies Ile-2–Val-241. Gly-38–Ser-45 lines the ATP pocket.

This sequence belongs to the ABC transporter superfamily. Methionine importer (TC 3.A.1.24) family. As to quaternary structure, the complex is composed of two ATP-binding proteins (MetN), two transmembrane proteins (MetI) and a solute-binding protein (MetQ).

The protein resides in the cell membrane. The catalysed reaction is L-methionine(out) + ATP + H2O = L-methionine(in) + ADP + phosphate + H(+). It carries out the reaction D-methionine(out) + ATP + H2O = D-methionine(in) + ADP + phosphate + H(+). Its function is as follows. Part of the ABC transporter complex MetNIQ involved in methionine import. Responsible for energy coupling to the transport system. The polypeptide is Methionine import ATP-binding protein MetN (Staphylococcus saprophyticus subsp. saprophyticus (strain ATCC 15305 / DSM 20229 / NCIMB 8711 / NCTC 7292 / S-41)).